We begin with the raw amino-acid sequence, 273 residues long: Dermonecrotic toxin LruSicTox-alphaIC1c (273 aa).

His5 is an active-site residue. Residues Glu25 and Asp27 each contribute to the Mg(2+) site. Catalysis depends on His41, which acts as the Nucleophile. Cystine bridges form between Cys45-Cys51 and Cys47-Cys190. Asp85 contributes to the Mg(2+) binding site.

Belongs to the arthropod phospholipase D family. Class II subfamily. The cofactor is Mg(2+). As to expression, expressed by the venom gland.

It localises to the secreted. It carries out the reaction an N-(acyl)-sphingosylphosphocholine = an N-(acyl)-sphingosyl-1,3-cyclic phosphate + choline. The enzyme catalyses an N-(acyl)-sphingosylphosphoethanolamine = an N-(acyl)-sphingosyl-1,3-cyclic phosphate + ethanolamine. It catalyses the reaction a 1-acyl-sn-glycero-3-phosphocholine = a 1-acyl-sn-glycero-2,3-cyclic phosphate + choline. The catalysed reaction is a 1-acyl-sn-glycero-3-phosphoethanolamine = a 1-acyl-sn-glycero-2,3-cyclic phosphate + ethanolamine. Its function is as follows. Dermonecrotic toxins cleave the phosphodiester linkage between the phosphate and headgroup of certain phospholipids (sphingolipid and lysolipid substrates), forming an alcohol (often choline) and a cyclic phosphate. This toxin acts on sphingomyelin (SM). It may also act on ceramide phosphoethanolamine (CPE), lysophosphatidylcholine (LPC) and lysophosphatidylethanolamine (LPE), but not on lysophosphatidylserine (LPS), and lysophosphatidylglycerol (LPG). It acts by transphosphatidylation, releasing exclusively cyclic phosphate products as second products. Induces dermonecrosis, hemolysis, increased vascular permeability, edema, inflammatory response, and platelet aggregation. The sequence is that of Dermonecrotic toxin LruSicTox-alphaIC1c from Loxosceles rufescens (Mediterranean recluse spider).